The following is a 125-amino-acid chain: Fluoride-specific ion channel FluC (125 aa).

4 helical membrane passes run 6–26, 35–55, 66–86, and 100–120; these read VLVM…GLGI, FLFG…GLFA, LLLL…ALSI, and AMGY…AGYL. The Na(+) site is built by Gly76 and Thr79.

This sequence belongs to the fluoride channel Fluc/FEX (TC 1.A.43) family.

It is found in the cell inner membrane. The enzyme catalyses fluoride(in) = fluoride(out). Its activity is regulated as follows. Na(+) is not transported, but it plays an essential structural role and its presence is essential for fluoride channel function. Its function is as follows. Fluoride-specific ion channel. Important for reducing fluoride concentration in the cell, thus reducing its toxicity. In Gloeobacter violaceus (strain ATCC 29082 / PCC 7421), this protein is Fluoride-specific ion channel FluC.